The following is a 157-amino-acid chain: 3-hydroxyacyl-[acyl-carrier-protein] dehydratase FabZ (157 aa).

His58 is an active-site residue.

The protein belongs to the thioester dehydratase family. FabZ subfamily.

The protein resides in the cytoplasm. The enzyme catalyses a (3R)-hydroxyacyl-[ACP] = a (2E)-enoyl-[ACP] + H2O. Involved in unsaturated fatty acids biosynthesis. Catalyzes the dehydration of short chain beta-hydroxyacyl-ACPs and long chain saturated and unsaturated beta-hydroxyacyl-ACPs. This chain is 3-hydroxyacyl-[acyl-carrier-protein] dehydratase FabZ, found in Brucella melitensis biotype 2 (strain ATCC 23457).